The primary structure comprises 121 residues: Parathyroid hormone 4 (121 aa).

An N-terminal signal peptide occupies residues 1-24 (MLKMQRSQQRVALMMLMVVAAVHC). Positions 25–29 (QESES) are excised as a propeptide. Positions 77–97 (RSRGAQLYSQPGREESSGGQK) are disordered.

This sequence belongs to the parathyroid hormone family. Specifically expressed in a bilateral cluster of neurons in the dorsal region of the periventricular hypothalamus. Their axons project through the midbrain and hindbrain and down the spinal cord.

The protein resides in the secreted. In terms of biological role, neuroendocrine peptide which is produced by a subset of neurons in the hypothalamus. Activates the G-protein coupled receptors pth1ra, pth1rb and pth2r with similar affinity. Receptor binding stimulates intracellular cAMP production. Plays a role in bone mineralization by regulating expression of factors involved in phosphate homeostasis. Important for embryonic bone development. This is Parathyroid hormone 4 from Danio rerio (Zebrafish).